A 335-amino-acid polypeptide reads, in one-letter code: Abasic site processing protein HMCES (335 aa).

Cys2 acts as the Nucleophile in catalysis. Thiazolidine linkage to a ring-opened DNA abasic site is present on Cys2. Residues 24 to 39 are compositionally biased toward basic and acidic residues; sequence QGGRKWPNWRDGDSDK. The segment at 24-51 is disordered; that stretch reads QGGRKWPNWRDGDSDKYQPSYNKSPQSN. Residues 40–51 are compositionally biased toward polar residues; it reads YQPSYNKSPQSN. Residue Glu129 is part of the active site. A disordered region spans residues 284–335; it reads LQNKSPKKEESHSIQSPKLSQFGAPPKKTSAGLMQQWLKKEDGEPSPKRAKK. Residues 321-335 are compositionally biased toward basic and acidic residues; the sequence is LKKEDGEPSPKRAKK.

The protein belongs to the SOS response-associated peptidase family. Ubiquitination of the hmces DNA-protein cross-link by rfwd3 may promotes its degradation.

The protein localises to the chromosome. Its activity is regulated as follows. Formation and reversal of DNA-protein cross-link depends on DNA context. Catalyzes formation of the thiazolidine linkage in presence of abasic sites in single-stranded DNA. Mediates the reversal of the thiazolidine cross-link in presence of double stranded DNA. Functionally, sensor of abasic sites in single-stranded DNA (ssDNA) required to preserve genome integrity by promoting error-free repair of abasic sites. Acts as an enzyme that recognizes and binds abasic sites in ssDNA at replication forks and chemically modifies the lesion by forming a covalent cross-link with DNA: forms a stable thiazolidine linkage between a ring-opened abasic site and the alpha-amino and sulfhydryl substituents of its N-terminal catalytic cysteine residue. The hmces DNA-protein cross-link is then either reversed or degraded. Hmces is able to catalyze the reversal of its thiazolidine cross-link and cycle between a cross-link and a non-cross-linked state depending on DNA context: mediates self-reversal of the thiazolidine cross-link in double stranded DNA, allowing apex1 to initiate downstream repair of abasic sites. The hmces DNA-protein cross-link can also be degraded by the sprtn metalloprotease following unfolding by the brip1/fancj helicase. Promotes error-free repair of abasic sites by protecting abasic sites from translesion synthesis (TLS) polymerases and endonucleases that are error-prone and would generate mutations and double-strand breaks. Acts as a protease: mediates autocatalytic processing of its N-terminal methionine in order to expose the catalytic cysteine. The hmces DNA-protein cross-link is then either reversed or degraded. According to a model, the HMCES DNA-protein cross-link. The protein is Abasic site processing protein HMCES of Xenopus tropicalis (Western clawed frog).